The sequence spans 432 residues: D-amino acid dehydrogenase (432 aa).

3-17 (VVILGSGVVGVASAW) contributes to the FAD binding site.

The protein belongs to the DadA oxidoreductase family. Requires FAD as cofactor.

It carries out the reaction a D-alpha-amino acid + A + H2O = a 2-oxocarboxylate + AH2 + NH4(+). It functions in the pathway amino-acid degradation; D-alanine degradation; NH(3) and pyruvate from D-alanine: step 1/1. Its function is as follows. Oxidative deamination of D-amino acids. In Escherichia coli O127:H6 (strain E2348/69 / EPEC), this protein is D-amino acid dehydrogenase.